We begin with the raw amino-acid sequence, 406 residues long: Formate-dependent phosphoribosylglycinamide formyltransferase (406 aa).

N(1)-(5-phospho-beta-D-ribosyl)glycinamide-binding positions include 27 to 28 (EL) and Glu-87. Residues Arg-120, Lys-162, 167 to 172 (SSGKGQ), 202 to 205 (EGFI), and Glu-210 contribute to the ATP site. An ATP-grasp domain is found at 125–320 (RLAAETLGLP…EFELHARALL (196 aa)). Positions 279 and 291 each coordinate Mg(2+). N(1)-(5-phospho-beta-D-ribosyl)glycinamide-binding positions include Asp-298, Lys-367, and 374–375 (RR).

The protein belongs to the PurK/PurT family. Homodimer.

It catalyses the reaction N(1)-(5-phospho-beta-D-ribosyl)glycinamide + formate + ATP = N(2)-formyl-N(1)-(5-phospho-beta-D-ribosyl)glycinamide + ADP + phosphate + H(+). Its pathway is purine metabolism; IMP biosynthesis via de novo pathway; N(2)-formyl-N(1)-(5-phospho-D-ribosyl)glycinamide from N(1)-(5-phospho-D-ribosyl)glycinamide (formate route): step 1/1. Functionally, involved in the de novo purine biosynthesis. Catalyzes the transfer of formate to 5-phospho-ribosyl-glycinamide (GAR), producing 5-phospho-ribosyl-N-formylglycinamide (FGAR). Formate is provided by PurU via hydrolysis of 10-formyl-tetrahydrofolate. The sequence is that of Formate-dependent phosphoribosylglycinamide formyltransferase from Bordetella parapertussis (strain 12822 / ATCC BAA-587 / NCTC 13253).